A 303-amino-acid chain; its full sequence is tRNA (guanine-N(7)-)-methyltransferase (303 aa).

The disordered stretch occupies residues 1–64; sequence MPKPHQVQVI…STSDKISLPR (64 aa). The segment covering 10 to 38 has biased composition (basic and acidic residues); it reads IKDRETQLREQQEAESKRRTYRDVKEETR. Residues Gly-118, 141 to 142, 177 to 178, and Cys-197 each bind S-adenosyl-L-methionine; these read EI and NA. The active site involves Asp-200. 275 to 277 contributes to the S-adenosyl-L-methionine binding site; the sequence is TEE.

The protein belongs to the class I-like SAM-binding methyltransferase superfamily. TrmB family. As to quaternary structure, forms a complex with TRM82.

Its subcellular location is the nucleus. It catalyses the reaction guanosine(46) in tRNA + S-adenosyl-L-methionine = N(7)-methylguanosine(46) in tRNA + S-adenosyl-L-homocysteine. It functions in the pathway tRNA modification; N(7)-methylguanine-tRNA biosynthesis. Catalyzes the formation of N(7)-methylguanine at position 46 (m7G46) in tRNA. This is tRNA (guanine-N(7)-)-methyltransferase from Scheffersomyces stipitis (strain ATCC 58785 / CBS 6054 / NBRC 10063 / NRRL Y-11545) (Yeast).